Consider the following 274-residue polypeptide: Large ribosomal subunit protein uL2 (274 aa).

2 disordered regions span residues 28-54 and 221-274; these read KPYA…TRHI and RGTA…RTKK. Residues 39 to 49 are compositionally biased toward polar residues; sequence KTGGRNNNGRI.

Belongs to the universal ribosomal protein uL2 family. Part of the 50S ribosomal subunit. Forms a bridge to the 30S subunit in the 70S ribosome.

One of the primary rRNA binding proteins. Required for association of the 30S and 50S subunits to form the 70S ribosome, for tRNA binding and peptide bond formation. It has been suggested to have peptidyltransferase activity; this is somewhat controversial. Makes several contacts with the 16S rRNA in the 70S ribosome. The sequence is that of Large ribosomal subunit protein uL2 from Photorhabdus laumondii subsp. laumondii (strain DSM 15139 / CIP 105565 / TT01) (Photorhabdus luminescens subsp. laumondii).